Consider the following 288-residue polypeptide: Bifunctional protein MdtA (288 aa).

NADP(+) contacts are provided by residues 129-132 (TGPV), 152-156 (RKLDK), 195-198 (TAGA), and K256.

In terms of assembly, homotrimer.

It is found in the cytoplasm. The catalysed reaction is 5,10-methylenetetrahydromethanopterin + NADP(+) = 5,10-methenyl-5,6,7,8-tetrahydromethanopterin + NADPH. It catalyses the reaction (6R)-5,10-methylene-5,6,7,8-tetrahydrofolate + NADP(+) = (6R)-5,10-methenyltetrahydrofolate + NADPH. Its pathway is one-carbon metabolism; formaldehyde degradation; formate from formaldehyde (H(4)MPT route): step 2/5. Its function is as follows. Catalyzes the dehydrogenation of methylene-H(4)MPT. Can also catalyze the reversible dehydrogenation of methylene-H(4)F with 20-fold lower catalytic efficiency. This is Bifunctional protein MdtA from Methylorubrum extorquens (strain ATCC 14718 / DSM 1338 / JCM 2805 / NCIMB 9133 / AM1) (Methylobacterium extorquens).